A 147-amino-acid polypeptide reads, in one-letter code: Hemoglobin subunit gamma-1 (147 aa).

At Gly2 the chain carries N-acetylglycine. The Globin domain maps to 3–147; that stretch reads HFTEEDKATI…VASALSSRYH (145 aa). Position 13 is a phosphothreonine (Thr13). Ser45, Ser51, and Ser53 each carry phosphoserine. Lys60 carries the post-translational modification N6-acetyllysine. His64 contributes to the heme b binding site. Lys83 is subject to N6-acetyllysine. His93 contacts heme b. An S-nitrosocysteine modification is found at Cys94. Ser140 is modified (phosphoserine).

It belongs to the globin family. In terms of assembly, heterotetramer of two alpha chains and two gamma chains in fetal hemoglobin (Hb F). As to expression, red blood cells.

Its function is as follows. Gamma chains make up the fetal hemoglobin F, in combination with alpha chains. The sequence is that of Hemoglobin subunit gamma-1 (HBG1) from Gorilla gorilla gorilla (Western lowland gorilla).